Reading from the N-terminus, the 88-residue chain is Putative regulatory protein PCC7424_3427 (88 aa).

This sequence belongs to the RemA family.

In Gloeothece citriformis (strain PCC 7424) (Cyanothece sp. (strain PCC 7424)), this protein is Putative regulatory protein PCC7424_3427.